The following is a 249-amino-acid chain: DNA repair protein RecO (249 aa).

It belongs to the RecO family.

In terms of biological role, involved in DNA repair and RecF pathway recombination. This chain is DNA repair protein RecO, found in Solidesulfovibrio magneticus (strain ATCC 700980 / DSM 13731 / RS-1) (Desulfovibrio magneticus).